The primary structure comprises 155 residues: Small ribosomal subunit protein uS7c (155 aa).

The protein belongs to the universal ribosomal protein uS7 family. As to quaternary structure, part of the 30S ribosomal subunit.

The protein localises to the plastid. It is found in the chloroplast. Functionally, one of the primary rRNA binding proteins, it binds directly to 16S rRNA where it nucleates assembly of the head domain of the 30S subunit. The polypeptide is Small ribosomal subunit protein uS7c (rps7) (Yucca glauca (Soapweed yucca)).